The sequence spans 197 residues: dITP/XTP pyrophosphatase (197 aa).

10–15 (TKNQGK) contributes to the substrate binding site. D70 acts as the Proton acceptor in catalysis. D70 contributes to the Mg(2+) binding site. Substrate-binding positions include S71, 151-154 (FGYD), K173, and 178-179 (HR).

Belongs to the HAM1 NTPase family. As to quaternary structure, homodimer. It depends on Mg(2+) as a cofactor.

The catalysed reaction is XTP + H2O = XMP + diphosphate + H(+). It catalyses the reaction dITP + H2O = dIMP + diphosphate + H(+). It carries out the reaction ITP + H2O = IMP + diphosphate + H(+). Pyrophosphatase that catalyzes the hydrolysis of nucleoside triphosphates to their monophosphate derivatives, with a high preference for the non-canonical purine nucleotides XTP (xanthosine triphosphate), dITP (deoxyinosine triphosphate) and ITP. Seems to function as a house-cleaning enzyme that removes non-canonical purine nucleotides from the nucleotide pool, thus preventing their incorporation into DNA/RNA and avoiding chromosomal lesions. The sequence is that of dITP/XTP pyrophosphatase from Symbiobacterium thermophilum (strain DSM 24528 / JCM 14929 / IAM 14863 / T).